A 296-amino-acid polypeptide reads, in one-letter code: Class E basic helix-loop-helix protein 22 (296 aa).

Residues 26–70 (SAFRPPQGLDLSQPGDRSPLHCYDGPDPSDLLRHHQHHHQASSGA) are disordered. One can recognise a bHLH domain in the interval 153–207 (TLRLNINARERRRMHDLNDALDELRAVIPYAHSPSVRKLSKIATLLLAKNYILMQ).

It localises to the nucleus. In terms of biological role, may act as a transcriptional repressor. The polypeptide is Class E basic helix-loop-helix protein 22 (bhlhe22) (Xenopus tropicalis (Western clawed frog)).